Reading from the N-terminus, the 148-residue chain is [Ribosomal protein bS18]-alanine N-acetyltransferase (148 aa).

Residues 2–147 form the N-acetyltransferase domain; the sequence is NTISSLETTD…DAIIMALPIS (146 aa). 69 to 71 contacts acetyl-CoA; sequence IAV. Residue E103 is the Proton acceptor of the active site. N108 contributes to the acetyl-CoA binding site. Catalysis depends on Y115, which acts as the Proton donor.

Belongs to the acetyltransferase family. RimI subfamily.

The protein resides in the cytoplasm. It carries out the reaction N-terminal L-alanyl-[ribosomal protein bS18] + acetyl-CoA = N-terminal N(alpha)-acetyl-L-alanyl-[ribosomal protein bS18] + CoA + H(+). Functionally, acetylates the N-terminal alanine of ribosomal protein bS18. The polypeptide is [Ribosomal protein bS18]-alanine N-acetyltransferase (Escherichia coli O157:H7).